The following is a 357-amino-acid chain: MSQSGKNGLTYSDAGVDIDAGNLLVEKIKPAVRSTRRPGADGEIGGFGGLFDLKAAGFTDPVLVAANDGVGTKLKIAIDADYHDTVGIDLVAMCVNDLVVQGAEPLFFLDYFATGKLDPDQGAAIVGGIAAGCREAGCALIGGETAEMPGMYSSGDYDLAGFAVGAAERGKLLPSGDIAEGDVILGLASSGVHSNGFSLVRKIVELSGLDWDSPAPFTEDKKLGEALLEPTRIYVKPLLKAIRETGAIKALAHITGGGFPENIPRVLPKHLAAEIDLATVKVPPVFSWLAKTGGVEAKEMLRTFNCGVGMIAVVAGENVATVSAALEAEGETVITLGRMIAREEGAAGTVYKGTLAI.

It belongs to the AIR synthase family.

It is found in the cytoplasm. It catalyses the reaction 2-formamido-N(1)-(5-O-phospho-beta-D-ribosyl)acetamidine + ATP = 5-amino-1-(5-phospho-beta-D-ribosyl)imidazole + ADP + phosphate + H(+). The protein operates within purine metabolism; IMP biosynthesis via de novo pathway; 5-amino-1-(5-phospho-D-ribosyl)imidazole from N(2)-formyl-N(1)-(5-phospho-D-ribosyl)glycinamide: step 2/2. The sequence is that of Phosphoribosylformylglycinamidine cyclo-ligase from Rhizobium johnstonii (strain DSM 114642 / LMG 32736 / 3841) (Rhizobium leguminosarum bv. viciae).